Reading from the N-terminus, the 503-residue chain is Probable cytosol aminopeptidase (503 aa).

Lysine 270 and aspartate 275 together coordinate Mn(2+). Residue lysine 282 is part of the active site. Mn(2+) contacts are provided by aspartate 293, aspartate 352, and glutamate 354. Arginine 356 is an active-site residue.

It belongs to the peptidase M17 family. Mn(2+) is required as a cofactor.

The protein resides in the cytoplasm. It carries out the reaction Release of an N-terminal amino acid, Xaa-|-Yaa-, in which Xaa is preferably Leu, but may be other amino acids including Pro although not Arg or Lys, and Yaa may be Pro. Amino acid amides and methyl esters are also readily hydrolyzed, but rates on arylamides are exceedingly low.. It catalyses the reaction Release of an N-terminal amino acid, preferentially leucine, but not glutamic or aspartic acids.. Functionally, presumably involved in the processing and regular turnover of intracellular proteins. Catalyzes the removal of unsubstituted N-terminal amino acids from various peptides. In Klebsiella pneumoniae (strain 342), this protein is Probable cytosol aminopeptidase.